A 62-amino-acid polypeptide reads, in one-letter code: Ranacyclin-T (62 aa).

Positions M1–C22 are cleaved as a signal peptide. Residues V23 to R43 constitute a propeptide that is removed on maturation. C49 and C59 are disulfide-bonded. Lysine amide is present on K60.

This sequence belongs to the frog skin active peptide (FSAP) family. Brevinin subfamily. As to expression, expressed by the skin granular glands.

It localises to the secreted. Has antibacterial activity against Gram-positive bacteria B.megaterium Bm11, S.lentus and M.luteus, and Gram-negative bacteria E.coli D22, Y.pseudotuberculosis YP III and P.syringae pv tabaci, and antifungal activity against C.albicans ATCC 10231, C.tropicalis, C.guiller-mondii and P.nicotianae spores. Has weak hemolytic activity. The mature peptide inserts into the hydrophobic core of the bacterial cell membrane and increases permeability without disrupting membrane integrity. Probably binds to the outer membrane surface before aggregating to form transmembrane pores. This is Ranacyclin-T (RNCT) from Rana temporaria (European common frog).